A 507-amino-acid chain; its full sequence is ATP synthase subunit alpha (507 aa).

Residue 169-176 (GDRQTGKT) coordinates ATP.

This sequence belongs to the ATPase alpha/beta chains family. As to quaternary structure, F-type ATPases have 2 components, CF(1) - the catalytic core - and CF(0) - the membrane proton channel. CF(1) has five subunits: alpha(3), beta(3), gamma(1), delta(1), epsilon(1). CF(0) has three main subunits: a(1), b(2) and c(9-12). The alpha and beta chains form an alternating ring which encloses part of the gamma chain. CF(1) is attached to CF(0) by a central stalk formed by the gamma and epsilon chains, while a peripheral stalk is formed by the delta and b chains. In this bacterium the a and b subunits are transcribed but do not seem to be translated, thus the ATP synthase consists of the alpha, beta, gamma, delta, epsilon and c subunits.

The protein localises to the cell membrane. It carries out the reaction ATP + H2O + 4 H(+)(in) = ADP + phosphate + 5 H(+)(out). Its function is as follows. Produces ATP from ADP in the presence of a proton gradient across the membrane. The alpha chain is a regulatory subunit. The polypeptide is ATP synthase subunit alpha (Moorella thermoacetica (strain ATCC 39073 / JCM 9320)).